Consider the following 245-residue polypeptide: Complement C1q subcomponent subunit A (245 aa).

Positions 1 to 22 (MEGPRGWLVLCVLAISLASMVT) are cleaved as a signal peptide. Basic and acidic residues predominate over residues 27–38 (RAPDGKKGEAGR). Positions 27-114 (RAPDGKKGEA…SPGNIKDQPR (88 aa)) are disordered. Positions 31–109 (GKKGEAGRPG…KGTKGSPGNI (79 aa)) constitute a Collagen-like domain. K33 carries the post-translational modification 5-hydroxylysine. A glycan (O-linked (Gal...) hydroxylysine) is linked at K33. P39 and P45 each carry 4-hydroxyproline. K48 is modified (5-hydroxylysine). O-linked (Gal...) hydroxylysine glycosylation is present at K48. 4-hydroxyproline occurs at positions 54 and 57. Residue K67 is modified to 5-hydroxylysine. A glycan (O-linked (Gal...) hydroxylysine) is linked at K67. Residues P73, P79, and P85 each carry the 4-hydroxyproline modification. K100 is modified (5-hydroxylysine). K100 is a glycosylation site (O-linked (Gal...) hydroxylysine). The C1q domain occupies 110-245 (KDQPRPAFSA…FSGFLIFPSA (136 aa)). N146 carries N-linked (GlcNAc...) asparagine glycosylation. C172 and C190 are joined by a disulfide. Q199 provides a ligand contact to Ca(2+).

In terms of assembly, core component of the complement C1 complex, a calcium-dependent complex composed of 1 molecule of the C1Q subcomplex, 2 molecules of C1R and 2 molecules of C1S. The C1Q subcomplex is composed 18 subunits: 3 chains of C1QA, C1QB, and C1QC trimerize to form 6 collagen-like triple helices connected to six globular ligand-recognition modules (C1q domain). Interacts with CR1 (via Sushi 24 and Sushi 25 domains). Interacts (via C-terminus) with CD33; this interaction activates CD33 inhibitory motifs. (Microbial infection) Interacts with Staphylococcus aureus protein Cna; this interaction results in the inhibition of the classical complement pathway. In terms of processing, O-linked glycans are assumed to be the Glc-Gal disaccharides typically found as secondary modifications of hydroxylated lysines in collagen-like domains.

The protein resides in the secreted. The protein localises to the cell surface. Its activity is regulated as follows. The C1Q subcomplex is inhibited by sulfated molecules, such as triterpenoid sulfates, heparan sulfate, or chondroitin sulfates. Core component of the complement C1 complex, a multiprotein complex that initiates the classical pathway of the complement system, a cascade of proteins that leads to phagocytosis and breakdown of pathogens and signaling that strengthens the adaptive immune system. The classical complement pathway is initiated by the C1Q subcomplex of the C1 complex, which specifically binds IgG or IgM immunoglobulins complexed with antigens, forming antigen-antibody complexes on the surface of pathogens: C1QA, together with C1QB and C1QC, specifically recognizes and binds the Fc regions of IgG or IgM via its C1q domain. Immunoglobulin-binding activates the proenzyme C1R, which cleaves C1S, initiating the proteolytic cascade of the complement system. The C1Q subcomplex is activated by a hexamer of IgG complexed with antigens, while it is activated by a pentameric IgM. The C1Q subcomplex also recognizes and binds phosphatidylserine exposed on the surface of cells undergoing programmed cell death, possibly promoting activation of the complement system. The protein is Complement C1q subcomponent subunit A of Homo sapiens (Human).